The primary structure comprises 668 residues: UvrABC system protein C (668 aa).

One can recognise a GIY-YIG domain in the interval 14 to 91 (DSPGCYLHKD…IQRYKPKYNI (78 aa)). Residues 196–231 (KKIVNELEAKMMVSSDNMEFEQAAEYRDVIKAIGTL) enclose the UVR domain.

The protein belongs to the UvrC family. Interacts with UvrB in an incision complex.

Its subcellular location is the cytoplasm. In terms of biological role, the UvrABC repair system catalyzes the recognition and processing of DNA lesions. UvrC both incises the 5' and 3' sides of the lesion. The N-terminal half is responsible for the 3' incision and the C-terminal half is responsible for the 5' incision. This Lactococcus lactis subsp. lactis (strain IL1403) (Streptococcus lactis) protein is UvrABC system protein C.